Consider the following 409-residue polypeptide: LL-diaminopimelate aminotransferase (409 aa).

Tyrosine 15 and glycine 42 together coordinate substrate. Pyridoxal 5'-phosphate is bound by residues tyrosine 72, alanine 108 to lysine 109, tyrosine 132, asparagine 186, tyrosine 217, and serine 245 to serine 247. Substrate is bound by residues lysine 109, tyrosine 132, and asparagine 186. Lysine 248 is modified (N6-(pyridoxal phosphate)lysine). 2 residues coordinate pyridoxal 5'-phosphate: arginine 256 and asparagine 291. Substrate-binding residues include asparagine 291 and arginine 385.

This sequence belongs to the class-I pyridoxal-phosphate-dependent aminotransferase family. LL-diaminopimelate aminotransferase subfamily. Homodimer. Pyridoxal 5'-phosphate serves as cofactor.

It carries out the reaction (2S,6S)-2,6-diaminopimelate + 2-oxoglutarate = (S)-2,3,4,5-tetrahydrodipicolinate + L-glutamate + H2O + H(+). The protein operates within amino-acid biosynthesis; L-lysine biosynthesis via DAP pathway; LL-2,6-diaminopimelate from (S)-tetrahydrodipicolinate (aminotransferase route): step 1/1. Functionally, involved in the synthesis of meso-diaminopimelate (m-DAP or DL-DAP), required for both lysine and peptidoglycan biosynthesis. Catalyzes the direct conversion of tetrahydrodipicolinate to LL-diaminopimelate. This Desulfosudis oleivorans (strain DSM 6200 / JCM 39069 / Hxd3) (Desulfococcus oleovorans) protein is LL-diaminopimelate aminotransferase.